Reading from the N-terminus, the 1246-residue chain is Putative helicase L115 (1246 aa).

Residues 1–21 (MSKTITKKVNKKTKKSTKINP) are disordered. The region spanning 872-1030 (AKFTDGYHGF…YYMLKMLQTG (159 aa)) is the Helicase ATP-binding domain. ATP is bound at residue 885 to 892 (SDVGSGKT).

The protein is Putative helicase L115 of Acanthamoeba polyphaga (Amoeba).